Reading from the N-terminus, the 98-residue chain is Acylphosphatase-1 (98 aa).

The Acylphosphatase-like domain occupies 8-98 (SVDYEVFGKV…LEHSTFSICK (91 aa)). Residues Arg23 and Asn41 contribute to the active site.

It belongs to the acylphosphatase family.

The catalysed reaction is an acyl phosphate + H2O = a carboxylate + phosphate + H(+). This Xenopus tropicalis (Western clawed frog) protein is Acylphosphatase-1 (acyp1).